A 710-amino-acid polypeptide reads, in one-letter code: Polyribonucleotide nucleotidyltransferase (710 aa).

Mg(2+) contacts are provided by aspartate 491 and aspartate 497. In terms of domain architecture, KH spans 558-618 (PRIYKIQVKP…SAAQKAIEII (61 aa)). An S1 motif domain is found at 628–696 (GRIYMGKVTR…ELGRVRLSRK (69 aa)).

This sequence belongs to the polyribonucleotide nucleotidyltransferase family. Requires Mg(2+) as cofactor.

The protein localises to the cytoplasm. It carries out the reaction RNA(n+1) + phosphate = RNA(n) + a ribonucleoside 5'-diphosphate. Its function is as follows. Involved in mRNA degradation. Catalyzes the phosphorolysis of single-stranded polyribonucleotides processively in the 3'- to 5'-direction. This is Polyribonucleotide nucleotidyltransferase from Thermodesulfovibrio yellowstonii (strain ATCC 51303 / DSM 11347 / YP87).